Here is a 553-residue protein sequence, read N- to C-terminus: Putative transport protein ASA_0825 (553 aa).

A run of 5 helical transmembrane segments spans residues 4-24 (IALS…LGNW), 29-49 (VGLG…FAGV), 65-85 (FGLI…FFSS), 95-115 (GFAA…HQLF), and 158-178 (MGYA…MWLV). RCK C-terminal domains lie at 191-276 (DLFE…VLGE) and 279-361 (ETSL…VVGN). 6 consecutive transmembrane segments (helical) span residues 371-391 (MLPV…PFYL), 403-425 (AGGP…LYWF), 439-459 (IVLF…DTLI), 465-485 (AWMM…GVLA), 493-513 (YLTL…LAFA), and 533-553 (LVMF…WAGV).

Belongs to the AAE transporter (TC 2.A.81) family. YidE subfamily.

The protein localises to the cell membrane. This is Putative transport protein ASA_0825 from Aeromonas salmonicida (strain A449).